A 27-amino-acid chain; its full sequence is Augerpeptide hhe6.2 (27 aa).

3 disulfide bridges follow: Cys-4/Cys-13, Cys-8/Cys-20, and Cys-12/Cys-27.

Expressed by the venom duct.

It localises to the secreted. This chain is Augerpeptide hhe6.2, found in Hastula hectica (Sea snail).